Consider the following 431-residue polypeptide: Enolase (431 aa).

Gln166 contacts (2R)-2-phosphoglycerate. Glu208 functions as the Proton donor in the catalytic mechanism. Residues Asp245, Glu288, and Asp315 each contribute to the Mg(2+) site. Positions 340, 369, 370, and 391 each coordinate (2R)-2-phosphoglycerate. The Proton acceptor role is filled by Lys340.

It belongs to the enolase family. Requires Mg(2+) as cofactor.

Its subcellular location is the cytoplasm. It localises to the secreted. The protein localises to the cell surface. It carries out the reaction (2R)-2-phosphoglycerate = phosphoenolpyruvate + H2O. The protein operates within carbohydrate degradation; glycolysis; pyruvate from D-glyceraldehyde 3-phosphate: step 4/5. Its function is as follows. Catalyzes the reversible conversion of 2-phosphoglycerate (2-PG) into phosphoenolpyruvate (PEP). It is essential for the degradation of carbohydrates via glycolysis. This chain is Enolase, found in Clostridium perfringens (strain 13 / Type A).